The primary structure comprises 140 residues: Nucleoside diphosphate kinase (140 aa).

Residues Lys-11, Phe-59, Arg-87, Thr-93, Arg-104, and Asn-114 each coordinate ATP. His-117 serves as the catalytic Pros-phosphohistidine intermediate.

This sequence belongs to the NDK family. In terms of assembly, homotetramer. Requires Mg(2+) as cofactor.

It is found in the cytoplasm. The enzyme catalyses a 2'-deoxyribonucleoside 5'-diphosphate + ATP = a 2'-deoxyribonucleoside 5'-triphosphate + ADP. The catalysed reaction is a ribonucleoside 5'-diphosphate + ATP = a ribonucleoside 5'-triphosphate + ADP. Functionally, major role in the synthesis of nucleoside triphosphates other than ATP. The ATP gamma phosphate is transferred to the NDP beta phosphate via a ping-pong mechanism, using a phosphorylated active-site intermediate. This is Nucleoside diphosphate kinase from Rickettsia peacockii (strain Rustic).